The sequence spans 391 residues: Serpin B13 (391 aa).

Belongs to the serpin family. Ov-serpin subfamily. As to expression, skin specific.

It localises to the cytoplasm. Functionally, may play a role in the proliferation or differentiation of keratinocytes. The polypeptide is Serpin B13 (SERPINB13) (Homo sapiens (Human)).